A 451-amino-acid chain; its full sequence is Serine--tRNA ligase, cytoplasmic (451 aa).

A disulfide bridge connects residues C213 and C244. L-serine is bound at residue 238 to 240 (TAE). Residues 269–271 (RKE) and V285 contribute to the ATP site. E292 contributes to the L-serine binding site. Position 358-361 (358-361 (ELVS)) interacts with ATP. T396 serves as a coordination point for L-serine.

The protein belongs to the class-II aminoacyl-tRNA synthetase family. Type-1 seryl-tRNA synthetase subfamily. Homodimer. The tRNA molecule binds across the dimer.

It is found in the cytoplasm. The protein localises to the cytosol. It carries out the reaction tRNA(Ser) + L-serine + ATP = L-seryl-tRNA(Ser) + AMP + diphosphate + H(+). Functionally, catalyzes the attachment of serine to tRNA(Ser) in a two-step reaction: serine is first activated by ATP to form Ser-AMP and then transferred to the acceptor end of tRNA(Ser). This chain is Serine--tRNA ligase, cytoplasmic, found in Arabidopsis thaliana (Mouse-ear cress).